A 960-amino-acid chain; its full sequence is Dynamin-like GTPase OPA1, mitochondrial (960 aa).

The transit peptide at 1–87 directs the protein to the mitochondrion; the sequence is MWRAGRAALA…TKYGYQPRRN (87 aa). Topologically, residues 88-96 are mitochondrial matrix; it reads FWPARLAAR. The helical transmembrane segment at 97–113 threads the bilayer; that stretch reads LLKLRYIILGSAVGGGY. The Mitochondrial intermembrane portion of the chain corresponds to 114–770; that stretch reads TAKKTFDEWK…NAIENMIGPD (657 aa). Residues 210–254 adopt a coiled-coil conformation; the sequence is SDKEKIDQLQEELLHTQLKYQRILERLEKENKELRKLVLQKDDKG. An LQQQIQ motif motif is present at residues 217-222; the sequence is QLQEEL. Lysine 228 bears the N6-acetyllysine mark. Positions 234 to 239 match the LQQQIQ motif motif; that stretch reads ERLEKE. In terms of domain architecture, Dynamin-type G spans 285–561; sequence QDHLPRVVVV…FWKMVRESVE (277 aa). Residues 295 to 302 form a G1 motif region; sequence GDQSAGKT. GTP contacts are provided by serine 298, glycine 300, lysine 301, threonine 302, serine 303, and glycine 317. Threonine 302 provides a ligand contact to Mg(2+). The G2 motif stretch occupies residues 321–324; the sequence is MMTR. Threonine 323 and aspartate 398 together coordinate Mg(2+). The segment at 398 to 401 is G3 motif; sequence DLPG. Positions 467 to 470 are G4 motif; that stretch reads TKVD. GTP is bound by residues lysine 468, aspartate 470, and threonine 503. The interval 501–504 is G5 motif; it reads VVTG. Stalk region stretches follow at residues 589–836 and 874–928; these read DRNE…IKDT and CNDV…VKLL. Residues 736–856 form a paddle region region; that stretch reads SDKQQWDAAI…KTALNHCNLC (121 aa). The stretch at 771–781 is an intramembrane region; sequence WKKRWIYWKNR. Over 782-960 the chain is Mitochondrial intermembrane; that stretch reads TQEQCVHNET…AFIEALHQEK (179 aa). An intrachain disulfide couples cysteine 856 to cysteine 874. Residues 895–960 adopt a coiled-coil conformation; it reads RQQLTNTEVR…AFIEALHQEK (66 aa).

The protein belongs to the TRAFAC class dynamin-like GTPase superfamily. Dynamin/Fzo/YdjA family. As to quaternary structure, oligomeric complex consisting of membrane-bound and soluble forms of OPA1. Interacts with RCC1L; RCC1L acts as a guanine nucleotide exchange factor (GEF) for OPA1 by exchanging bound GDP for free GTP. Interacts with CHCHD3 and IMMT; these interactions occur preferentially with soluble OPA1 forms. Interacts with PRELID1. Post-translationally, cleaved by OMA1 or YME1L downstream of the transmembrane region in response to different signals to generate soluble forms. Cleaved by OMA1 at position S1 following stress conditions, generating the short soluble form (Dynamin-like GTPase OPA1, short form; S-OPA1). AFG3L2 is involved in the regulation of OMA1-dependent processing of OPA1. PARL-dependent proteolytic processing releases an antiapoptotic soluble form not required for mitochondrial fusion. Cleavage at position S2 by YME1L is required to mediate oxidative phosphorylation (OXPHOS)-induced mitochondrial fusion. Cleavage occurs in the sequence motif Leu-Gln-Gln-Gln-Ile-Gln (LQQQIQ). Expressed in brain as well as retinal ganglion, starbust amacrine and horizontal cells of the retina. Absent from nerve fibers and photoreceptor cells of the retina.

It is found in the mitochondrion inner membrane. Its subcellular location is the mitochondrion intermembrane space. It carries out the reaction GTP + H2O = GDP + phosphate + H(+). With respect to regulation, activated by guanine nucleotide exchange factor RCC1L. Its function is as follows. Dynamin-related GTPase that is essential for normal mitochondrial morphology by mediating fusion of the mitochondrial inner membranes, regulating cristae morphology and maintaining respiratory chain function. Exists in two forms: the transmembrane, long form (Dynamin-like GTPase OPA1, long form; L-OPA1), which is tethered to the inner mitochondrial membrane, and the short soluble form (Dynamin-like GTPase OPA1, short form; S-OPA1), which results from proteolytic cleavage and localizes in the intermembrane space. Both forms (L-OPA1 and S-OPA1) cooperate to catalyze the fusion of the mitochondrial inner membrane. The equilibrium between L-OPA1 and S-OPA1 is essential: excess levels of S-OPA1, produced by cleavage by OMA1 following loss of mitochondrial membrane potential, lead to an impaired equilibrium between L-OPA1 and S-OPA1, inhibiting mitochondrial fusion. The balance between L-OPA1 and S-OPA1 also influences cristae shape and morphology. Involved in remodeling cristae and the release of cytochrome c during apoptosis. Proteolytic processing by PARL in response to intrinsic apoptotic signals may lead to disassembly of OPA1 oligomers and release of the caspase activator cytochrome C (CYCS) into the mitochondrial intermembrane space. Acts as a regulator of T-helper Th17 cells, which are characterized by cells with fused mitochondria with tight cristae, by mediating mitochondrial membrane remodeling: OPA1 is required for interleukin-17 (IL-17) production. Its role in mitochondrial morphology is required for mitochondrial genome maintenance. In terms of biological role, constitutes the transmembrane long form (L-OPA1) that plays a central role in mitochondrial inner membrane fusion and cristae morphology. L-OPA1 and the soluble short form (S-OPA1) form higher-order helical assemblies that coordinate the fusion of mitochondrial inner membranes. Inner membrane-anchored L-OPA1 molecules initiate membrane remodeling by recruiting soluble S-OPA1 to rapidly polymerize into a flexible cylindrical scaffold encaging the mitochondrial inner membrane. Once at the membrane surface, the formation of S-OPA1 helices induce bilayer curvature. OPA1 dimerization through the paddle region, which inserts into cardiolipin-containing membrane, promotes GTP hydrolysis and the helical assembly of a flexible OPA1 lattice on the membrane, which drives membrane curvature and mitochondrial fusion. Plays a role in the maintenance and remodeling of mitochondrial cristae, some invaginations of the mitochondrial inner membrane that provide an increase in the surface area. Probably acts by forming helical filaments at the inside of inner membrane tubes with the shape and dimensions of crista junctions. The equilibrium between L-OPA1 and S-OPA1 influences cristae shape and morphology: increased L-OPA1 levels promote cristae stacking and elongated mitochondria, while increased S-OPA1 levels correlated with irregular cristae packing and round mitochondria shape. Functionally, constitutes the soluble short form (S-OPA1) generated by cleavage by OMA1, which plays a central role in mitochondrial inner membrane fusion and cristae morphology. The transmembrane long form (L-OPA1) and the S-OPA1 form higher-order helical assemblies that coordinate the fusion of mitochondrial inner membranes. Inner membrane-anchored L-OPA1 molecules initiate membrane remodeling by recruiting soluble S-OPA1 to rapidly polymerize into a flexible cylindrical scaffold encaging the mitochondrial inner membrane. Once at the membrane surface, the formation of S-OPA1 helices induce bilayer curvature. OPA1 dimerization through the paddle region, which inserts into cardiolipin-containing membrane, promotes GTP hydrolysis and the helical assembly of a flexible OPA1 lattice on the membrane, which drives membrane curvature and mitochondrial fusion. Excess levels of S-OPA1 produced by cleavage by OMA1 following stress conditions that induce loss of mitochondrial membrane potential, lead to an impaired equilibrium between L-OPA1 and S-OPA1, thereby inhibiting mitochondrial fusion. Involved in mitochondrial safeguard in response to transient mitochondrial membrane depolarization by mediating flickering: cleavage by OMA1 leads to excess production of S-OPA1, preventing mitochondrial hyperfusion. Plays a role in the maintenance and remodeling of mitochondrial cristae, some invaginations of the mitochondrial inner membrane that provide an increase in the surface area. Probably acts by forming helical filaments at the inside of inner membrane tubes with the shape and dimensions of crista junctions. The equilibrium between L-OPA1 and S-OPA1 influences cristae shape and morphology: increased L-OPA1 levels promote cristae stacking and elongated mitochondria, while increased S-OPA1 levels correlated with irregular cristae packing and round mitochondria shape. Isoforms that contain the alternative exon 4b are required for mitochondrial genome maintenance, possibly by anchoring the mitochondrial nucleoids to the inner mitochondrial membrane. This is Dynamin-like GTPase OPA1, mitochondrial from Rattus norvegicus (Rat).